The following is a 497-amino-acid chain: Probable sensor kinase SilS (497 aa).

Topologically, residues 1–15 (MHSKPSRLPFSLALR) are cytoplasmic. The helical transmembrane segment at 16 to 36 (LTFFISLSTILAFIAFTWFML) threads the bilayer. The Periplasmic portion of the chain corresponds to 37-186 (HSVEKHFAEQ…HLHYLDALKK (150 aa)). A helical transmembrane segment spans residues 187–207 (NLIAIAVVISLLIVLIIRIAV). Residues 208 to 261 (RQGHLPLRNVSNAIKNITSENLDARLEPTRVPIELEQLVISFNHMIGKIEDVFT) enclose the HAMP domain. Residues 208–497 (RQGHLPLRNV…KMIPDTQCWE (290 aa)) are Cytoplasmic-facing. Residues 269–487 (DIAHEIRTPI…RFILSVPRLE (219 aa)) enclose the Histidine kinase domain. His-272 carries the post-translational modification Phosphohistidine; by autocatalysis.

The protein resides in the cell inner membrane. It carries out the reaction ATP + protein L-histidine = ADP + protein N-phospho-L-histidine.. Functionally, component of the sil cation-efflux system that confers resistance to silver. Probable member of a two-component regulatory system SilS/SilR. May activate SilR by phosphorylation. The polypeptide is Probable sensor kinase SilS (silS) (Salmonella typhimurium).